Consider the following 282-residue polypeptide: Halorhodopsin (282 aa).

Over 1–29 (MMETAADALASGTVPLEMTQTQIFEAIQG) the chain is Extracellular. A helical membrane pass occupies residues 30–55 (DTLLASSLWINIALAGLSILLFVYMG). At 56-61 (RNLEDP) the chain is on the cytoplasmic side. The chain crosses the membrane as a helical span at residues 62–85 (RAQLIFVATLMVPLVSISSYTGLV). Topologically, residues 86–109 (SGLTVSFLEMPAGHALAGQEVLTP) are extracellular. Residues 110-131 (WGRYLTWALSTPMILVALGLLA) traverse the membrane as a helical segment. Residues 132–134 (GSN) are Cytoplasmic-facing. Residues 135 to 158 (ATKLFTAVTADIGMCVTGLAAALT) traverse the membrane as a helical segment. The Extracellular segment spans residues 159–161 (TSS). A helical transmembrane segment spans residues 162 to 184 (YLLRWVWYVISCAFFVVVLYVLL). Over 185-196 (AEWAEDAEVAGT) the chain is Cytoplasmic. Residues 197–220 (AEIFNTLKLLTVVLWLGYPIFWAL) form a helical membrane-spanning segment. The Extracellular segment spans residues 221-229 (GAEGLAVLD). A helical membrane pass occupies residues 230 to 258 (VAVTSWAYSGMDIVAKYLFAFLLLRWVVD). Position 245 is an N6-(retinylidene)lysine (lysine 245). The Cytoplasmic segment spans residues 259–282 (NERTVAGMAAGLGAPLARCAPADD).

It belongs to the archaeal/bacterial/fungal opsin family.

Its subcellular location is the cell membrane. Its function is as follows. Light-driven chloride pump. The polypeptide is Halorhodopsin (hop) (Halorubrum sodomense).